A 297-amino-acid chain; its full sequence is 33 kDa chaperonin (297 aa).

2 disulfide bridges follow: Cys234–Cys236 and Cys267–Cys270.

Belongs to the HSP33 family. In terms of processing, under oxidizing conditions two disulfide bonds are formed involving the reactive cysteines. Under reducing conditions zinc is bound to the reactive cysteines and the protein is inactive.

Its subcellular location is the cytoplasm. Its function is as follows. Redox regulated molecular chaperone. Protects both thermally unfolding and oxidatively damaged proteins from irreversible aggregation. Plays an important role in the bacterial defense system toward oxidative stress. This chain is 33 kDa chaperonin, found in Pseudoalteromonas atlantica (strain T6c / ATCC BAA-1087).